Reading from the N-terminus, the 381-residue chain is Putative 8-amino-7-oxononanoate synthase (381 aa).

R20 provides a ligand contact to substrate. 107 to 108 (GY) provides a ligand contact to pyridoxal 5'-phosphate. H132 contacts substrate. Pyridoxal 5'-phosphate contacts are provided by residues S180, 205–208 (DEAH), and 236–239 (TLSK). K239 is subject to N6-(pyridoxal phosphate)lysine. A substrate-binding site is contributed by T351.

The protein belongs to the class-II pyridoxal-phosphate-dependent aminotransferase family. BioF subfamily. As to quaternary structure, homodimer. Pyridoxal 5'-phosphate is required as a cofactor.

The enzyme catalyses 6-carboxyhexanoyl-[ACP] + L-alanine + H(+) = (8S)-8-amino-7-oxononanoate + holo-[ACP] + CO2. The protein operates within cofactor biosynthesis; biotin biosynthesis. Functionally, catalyzes the decarboxylative condensation of pimeloyl-[acyl-carrier protein] and L-alanine to produce 8-amino-7-oxononanoate (AON), [acyl-carrier protein], and carbon dioxide. The chain is Putative 8-amino-7-oxononanoate synthase (bioF) from Rippkaea orientalis (strain PCC 8801 / RF-1) (Cyanothece sp. (strain PCC 8801)).